The sequence spans 200 residues: MTIRYPNGKRYNQASQPQKTPIKTHTYSNRGMSLEEELNETNQYYLTHNIACVHKKPTPLQIVKVDYPARSAAVVKEAYFKQPSTTDYNGVYKGKYIDFEAKETKNKTSFPLQNFHLHQIEHMKQVVAHNGIAFVIIKFTLFDEFYLLDAKHIIAFWNRQNTGGRKSITKEEIEEHGSLLSCGYHPRIDYIRVLDMVYFS.

Residues 1-25 (MTIRYPNGKRYNQASQPQKTPIKTH) form a disordered region. Over residues 10 to 25 (RYNQASQPQKTPIKTH) the composition is skewed to polar residues. Mg(2+) contacts are provided by T85, D87, E100, and Q119.

Belongs to the RecU family. Requires Mg(2+) as cofactor.

It is found in the cytoplasm. The enzyme catalyses Endonucleolytic cleavage at a junction such as a reciprocal single-stranded crossover between two homologous DNA duplexes (Holliday junction).. Functionally, endonuclease that resolves Holliday junction intermediates in genetic recombination. Cleaves mobile four-strand junctions by introducing symmetrical nicks in paired strands. Promotes annealing of linear ssDNA with homologous dsDNA. Required for DNA repair, homologous recombination and chromosome segregation. The polypeptide is Holliday junction resolvase RecU (Bacillus cereus (strain B4264)).